Reading from the N-terminus, the 130-residue chain is Cholecystokinin (130 aa).

The signal sequence occupies residues 1–20 (MYSGICIYMFLAMLSTSSSG). A propeptide spanning residues 21-60 (QQATGSHNENPVATELEQSLTEHHRHVRVPSSAGQLKPIQ) is cleaved from the precursor. A Sulfotyrosine modification is found at tyrosine 112. A Phenylalanine amide modification is found at phenylalanine 118. The propeptide occupies 122 to 130 (SAEEYEYSS). 2 positions are modified to sulfotyrosine: tyrosine 126 and tyrosine 128.

This sequence belongs to the gastrin/cholecystokinin family. In terms of processing, the precursor is cleaved by proteases to produce a number of active cholecystokinins. In terms of tissue distribution, expressed in brain, duodenum and small intestine.

The protein resides in the secreted. In terms of biological role, this peptide hormone induces gall bladder contraction and the release of pancreatic enzymes in the gut. Its function in the brain is not clear. The polypeptide is Cholecystokinin (Trachemys scripta (Red-eared slider turtle)).